Here is a 202-residue protein sequence, read N- to C-terminus: Peptidyl-tRNA hydrolase (202 aa).

TRNA is bound at residue tyrosine 19. Histidine 24 serves as the catalytic Proton acceptor. TRNA-binding residues include tyrosine 70, asparagine 72, and asparagine 118.

This sequence belongs to the PTH family. As to quaternary structure, monomer.

Its subcellular location is the cytoplasm. The catalysed reaction is an N-acyl-L-alpha-aminoacyl-tRNA + H2O = an N-acyl-L-amino acid + a tRNA + H(+). Hydrolyzes ribosome-free peptidyl-tRNAs (with 1 or more amino acids incorporated), which drop off the ribosome during protein synthesis, or as a result of ribosome stalling. In terms of biological role, catalyzes the release of premature peptidyl moieties from peptidyl-tRNA molecules trapped in stalled 50S ribosomal subunits, and thus maintains levels of free tRNAs and 50S ribosomes. This chain is Peptidyl-tRNA hydrolase, found in Prochlorococcus marinus (strain NATL2A).